The chain runs to 333 residues: NADH-quinone oxidoreductase subunit H (333 aa).

8 helical membrane passes run 17–37, 91–111, 116–136, 156–176, 188–208, 244–264, 272–292, and 310–330; these read VIQA…MSFI, VAMA…TLGV, IGLL…LFGG, ISYE…AGSF, MWFI…GVAV, YVNI…GWLA, FIPP…MFVL, and WKVC…VILM.

Belongs to the complex I subunit 1 family. In terms of assembly, NDH-1 is composed of 14 different subunits. Subunits NuoA, H, J, K, L, M, N constitute the membrane sector of the complex.

The protein localises to the cell inner membrane. The enzyme catalyses a quinone + NADH + 5 H(+)(in) = a quinol + NAD(+) + 4 H(+)(out). In terms of biological role, NDH-1 shuttles electrons from NADH, via FMN and iron-sulfur (Fe-S) centers, to quinones in the respiratory chain. The immediate electron acceptor for the enzyme in this species is believed to be ubiquinone. Couples the redox reaction to proton translocation (for every two electrons transferred, four hydrogen ions are translocated across the cytoplasmic membrane), and thus conserves the redox energy in a proton gradient. This subunit may bind ubiquinone. This is NADH-quinone oxidoreductase subunit H from Acinetobacter baylyi (strain ATCC 33305 / BD413 / ADP1).